A 567-amino-acid chain; its full sequence is Diphtheria toxin (567 aa).

The N-terminal stretch at methionine 1 to alanine 32 is a signal peptide. The NAD(+) site is built by histidine 53 and tyrosine 97. Residue glutamate 180 is part of the active site. 2 disulfide bridges follow: cysteine 218–cysteine 233 and cysteine 493–cysteine 503.

Homodimer. Proteolytic activation by host furin cleaves the protein in two parts, Diphtheria toxin fragment A and Diphtheria toxin fragment B; which remain associated via a disulfide bond.

It carries out the reaction diphthamide-[translation elongation factor 2] + NAD(+) = N-(ADP-D-ribosyl)diphthamide-[translation elongation factor 2] + nicotinamide + H(+). Partially inhibited by 1,8-naphthalimide (NAP). Diphtheria toxin, produced by a phage infecting Corynebacterium diphtheriae, is a proenzyme that, after activation, catalyzes the covalent attachment of the ADP ribose moiety of NAD to eukaryotic elongation factor 2 (eEF-2). Fragment A is the catalytic portion responsible for enzymatic ADP-ribosylation of elongation factor 2, while fragment B is responsible for binding of toxin to cell receptors and entry of fragment A. This is Diphtheria toxin from Corynebacterium diphtheriae.